A 90-amino-acid chain; its full sequence is uncharacterized protein (90 aa).

This is an uncharacterized protein from Saccharomyces cerevisiae (strain ATCC 204508 / S288c) (Baker's yeast).